The sequence spans 487 residues: Bifunctional cytokinin biosynthesis protein (487 aa).

The interval 1–266 (MESTNRFMIG…RMASDFCYAS (266 aa)) is adenylate isopentenyltransferase. Residues 267–487 (TSISFHPINE…FSRKGELEWV (221 aa)) form a cytokinin riboside 5'-monophosphate phosphoribohydrolase region. Substrate-binding positions include glutamate 352, 380–381 (RK), 403–409 (GYGTLEE), and threonine 415.

It in the N-terminal section; belongs to the IPP transferase family. The protein in the C-terminal section; belongs to the LOG family.

The enzyme catalyses dimethylallyl diphosphate + AMP = N(6)-(dimethylallyl)adenosine 5'-phosphate + diphosphate. It carries out the reaction N(6)-(dimethylallyl)adenosine 5'-phosphate + H2O = N(6)-dimethylallyladenine + D-ribose 5-phosphate. The catalysed reaction is 9-ribosyl-trans-zeatin 5'-phosphate + H2O = trans-zeatin + D-ribose 5-phosphate. Its pathway is secondary metabolite biosynthesis. Functionally, bifunctional cytokinin synthesis protein; part of the gene cluster that mediates the biosynthesis of cytokinins such as fusatin, fusatinic acids or 8-oxofusatin, known for their growth promoting and anti-senescence activities toward host plants. FCK1 is a bifunctional enzyme that performs the first steps in the biosynthesis of Fusarium cytokinins. It first condenses adenosine monophosphate (AMP) with dimethylallyl diphosphate (DMAPP) to yield isoprenyl adenosine monophosphate. It then catalyzes the removal of the phosphoribose to produce isopentenylaldehyde. The cytochrome P450 monooxygenase then converts isopentenylaldehyde to trans-zeatin. A condensation step converts trans-zeatin to fusatin which is further modified to produce fusatinic acid. The mechanism for oxidation of fusatin to fusatinic acid remains unknown. 8-oxofusatin could be produced through several pathways, via direct oxygenation of fusatin, or via the 8-oxo-pentenyladenine intermediate which itself must arise from either the prenylation of 8-oxo-AMP by FCK1 and/or oxygenation of isopentenylaldehyde. Both the FCK3 and FCK4 enzymes act downstream of the identified cytokinins to produce yet unidentified compounds. The polypeptide is Bifunctional cytokinin biosynthesis protein (Fusarium pseudograminearum (strain CS3096) (Wheat and barley crown-rot fungus)).